The following is a 49-amino-acid chain: Large ribosomal subunit protein bL33 (49 aa).

It belongs to the bacterial ribosomal protein bL33 family.

This chain is Large ribosomal subunit protein bL33, found in Streptococcus pyogenes serotype M18 (strain MGAS8232).